Here is a 274-residue protein sequence, read N- to C-terminus: 2,3,4,5-tetrahydropyridine-2,6-dicarboxylate N-succinyltransferase (274 aa).

Substrate contacts are provided by arginine 104 and aspartate 141.

The protein belongs to the transferase hexapeptide repeat family. Homotrimer.

The protein resides in the cytoplasm. It carries out the reaction (S)-2,3,4,5-tetrahydrodipicolinate + succinyl-CoA + H2O = (S)-2-succinylamino-6-oxoheptanedioate + CoA. The protein operates within amino-acid biosynthesis; L-lysine biosynthesis via DAP pathway; LL-2,6-diaminopimelate from (S)-tetrahydrodipicolinate (succinylase route): step 1/3. The polypeptide is 2,3,4,5-tetrahydropyridine-2,6-dicarboxylate N-succinyltransferase (Shewanella baltica (strain OS155 / ATCC BAA-1091)).